We begin with the raw amino-acid sequence, 352 residues long: Lipopolysaccharide core biosynthesis mannosyltransferase LpcC (352 aa).

This sequence belongs to the glycosyltransferase group 1 family. Glycosyltransferase 4 subfamily.

The protein operates within bacterial outer membrane biogenesis; LPS core biosynthesis. Acts at transfer of mannose group to a 3-deoxy-D-mono octulonic acid (KDO) via an alpha-1,5 linkage. The protein is Lipopolysaccharide core biosynthesis mannosyltransferase LpcC (lpcC) of Rhizobium leguminosarum bv. viciae.